The primary structure comprises 523 residues: Glycerate kinase (523 aa).

Residue Ser-60 is modified to Phosphoserine.

This sequence belongs to the glycerate kinase type-2 family. In terms of tissue distribution, widely expressed.

It is found in the cytoplasm. It localises to the mitochondrion. It catalyses the reaction (R)-glycerate + ATP = (2R)-3-phosphoglycerate + ADP + H(+). The chain is Glycerate kinase (GLYCTK) from Homo sapiens (Human).